Reading from the N-terminus, the 209-residue chain is Lipopolysaccharide export system protein LptC (209 aa).

Residues 7-26 (NIRWNVILGVIALCALAWFY) traverse the membrane as a helical segment.

This sequence belongs to the LptC family. Component of the lipopolysaccharide transport and assembly complex. Interacts with LptA and the LptBFG transporter complex.

The protein localises to the cell inner membrane. Its function is as follows. Involved in the assembly of lipopolysaccharide (LPS). Required for the translocation of LPS from the inner membrane to the outer membrane. Facilitates the transfer of LPS from the inner membrane to the periplasmic protein LptA. Could be a docking site for LptA. This Haemophilus influenzae (strain ATCC 51907 / DSM 11121 / KW20 / Rd) protein is Lipopolysaccharide export system protein LptC.